A 141-amino-acid polypeptide reads, in one-letter code: Nucleoside diphosphate kinase (141 aa).

The ATP site is built by K11, F59, R87, T93, R104, and N114. H117 serves as the catalytic Pros-phosphohistidine intermediate.

The protein belongs to the NDK family. As to quaternary structure, homotetramer. The cofactor is Mg(2+).

Its subcellular location is the cytoplasm. The enzyme catalyses a 2'-deoxyribonucleoside 5'-diphosphate + ATP = a 2'-deoxyribonucleoside 5'-triphosphate + ADP. It catalyses the reaction a ribonucleoside 5'-diphosphate + ATP = a ribonucleoside 5'-triphosphate + ADP. Major role in the synthesis of nucleoside triphosphates other than ATP. The ATP gamma phosphate is transferred to the NDP beta phosphate via a ping-pong mechanism, using a phosphorylated active-site intermediate. This is Nucleoside diphosphate kinase from Paracidovorax citrulli (strain AAC00-1) (Acidovorax citrulli).